Consider the following 358-residue polypeptide: tRNA-specific 2-thiouridylase MnmA (358 aa).

ATP is bound by residues 6-13 (LVSGGVDS) and isoleucine 32. Residues 93–95 (NPD) form an interaction with target base in tRNA region. The active-site Nucleophile is the cysteine 98. A disulfide bridge links cysteine 98 with cysteine 193. Glycine 121 is a binding site for ATP. The interval 143–145 (KDQ) is interaction with tRNA. The active-site Cysteine persulfide intermediate is the cysteine 193.

It belongs to the MnmA/TRMU family.

It is found in the cytoplasm. It carries out the reaction S-sulfanyl-L-cysteinyl-[protein] + uridine(34) in tRNA + AH2 + ATP = 2-thiouridine(34) in tRNA + L-cysteinyl-[protein] + A + AMP + diphosphate + H(+). In terms of biological role, catalyzes the 2-thiolation of uridine at the wobble position (U34) of tRNA, leading to the formation of s(2)U34. The polypeptide is tRNA-specific 2-thiouridylase MnmA (Parabacteroides distasonis (strain ATCC 8503 / DSM 20701 / CIP 104284 / JCM 5825 / NCTC 11152)).